The primary structure comprises 175 residues: Disulfide bond formation protein B (175 aa).

Topologically, residues 1–13 (MVSNWLDAAPRRV) are cytoplasmic. The chain crosses the membrane as a helical span at residues 14–30 (LALISAACIAMLAFGMY). Residues 31 to 48 (LQHVVGLEPCPMCIVQRY) are Periplasmic-facing. Cysteines 40 and 43 form a disulfide. A helical transmembrane segment spans residues 49 to 65 (ALIGVAVFTGLGSLRGG). Residues 66–70 (RGWWM) are Cytoplasmic-facing. Residues 71–88 (TWGVLALLLSGFGAFVAA) traverse the membrane as a helical segment. The Periplasmic portion of the chain corresponds to 89–144 (RQSWLQWYPPEIATCGRDFYGMIENFPISRAIPMIFRGSGDCAAIDWTFLGGSIAN). Cysteine 103 and cysteine 130 are joined by a disulfide. The chain crosses the membrane as a helical span at residues 145–163 (WSFVCFVVMALVLLVMLLR). Residues 164 to 175 (APRPARGGFSAA) lie on the Cytoplasmic side of the membrane.

It belongs to the DsbB family.

Its subcellular location is the cell inner membrane. In terms of biological role, required for disulfide bond formation in some periplasmic proteins. Acts by oxidizing the DsbA protein. This is Disulfide bond formation protein B from Paracidovorax citrulli (strain AAC00-1) (Acidovorax citrulli).